Reading from the N-terminus, the 201-residue chain is MAGKSSLFKVILLGDGGVGKSSLMNRYVTNKFDTQLFHTIGVEFLNKDLEVDGHFVTMQIWDTAGQERFRSLRTPFYRGSDCCLLTFSVDDSQSFQNLSNWKKEFIYYADVKEPESFPFVILGNKIDISERQVSTEEAQAWCRDNGDYPYFETSAKDATNVAAAFEEAVRRVLATEDRSDHLIQTDTVNLHRKPKPSSSCC.

The residue at position 2 (alanine 2) is an N-acetylalanine. Residue glycine 17 coordinates GDP. Residues glycine 17, valine 18, glycine 19, lysine 20, serine 21, serine 22, threonine 34, histidine 38, and threonine 39 each coordinate GTP. Residues glycine 19, lysine 20, serine 21, and serine 22 each coordinate GDP. Serine 21 contributes to the Mg(2+) binding site. Residues 31–42 carry the Switch 1 motif; the sequence is KFDTQLFHTIGV. The Mg(2+) site is built by threonine 39 and aspartate 62. A Switch 2 motif is present at residues 64–78; the sequence is AGQERFRSLRTPFYR. GTP is bound by residues glycine 65, asparagine 124, lysine 125, aspartate 127, alanine 155, and lysine 156. Asparagine 124, lysine 125, aspartate 127, alanine 155, and lysine 156 together coordinate GDP. Position 179 is a phosphoserine (serine 179). Threonine 187 bears the Phosphothreonine mark. 2 S-geranylgeranyl cysteine lipidation sites follow: cysteine 200 and cysteine 201.

It belongs to the small GTPase superfamily. Rab family. In terms of assembly, interacts (preferentially in its GTP-bound form) with GCC2 (via its GRIP domain). Interacts (GTP-bound form) with SGSM1; the GDP-bound form has much lower affinity for SGSM1. Interacts with SGSM2. The GTP-bound form but not the GDP-bound form interacts with HPS4 and BLOC-3 complex (heterodimer of HPS1 and HPS4) but does not interact with HPS1 alone. Interacts (GTP-bound form) with NDE1; two RAB9A-GTP molecules lie on the opposite sides of the NDE1 homodimer; the interaction leads to RAB9A-dynein motor tethering. Interacts (GTP-bound form) with NDEL1. Mg(2+) serves as cofactor.

The protein localises to the cell membrane. It is found in the endoplasmic reticulum membrane. The protein resides in the golgi apparatus membrane. It localises to the late endosome. Its subcellular location is the cytoplasmic vesicle. The protein localises to the phagosome membrane. It is found in the phagosome. The protein resides in the cytoplasmic vesicle membrane. It localises to the melanosome. It catalyses the reaction GTP + H2O = GDP + phosphate + H(+). With respect to regulation, regulated by guanine nucleotide exchange factors (GEFs) which promote the exchange of bound GDP for free GTP. Regulated by GTPase activating proteins (GAPs) which increase the GTP hydrolysis activity. Inhibited by GDP dissociation inhibitors (GDIs). In terms of biological role, the small GTPases Rab are key regulators of intracellular membrane trafficking, from the formation of transport vesicles to their fusion with membranes. Rabs cycle between an inactive GDP-bound form and an active GTP-bound form that is able to recruit to membranes different sets of downstream effectors directly responsible for vesicle formation, movement, tethering and fusion. RAB9A is involved in the transport of proteins between the endosomes and the trans-Golgi network (TGN). Specifically uses NDE1/NDEL1 as an effector to interact with the dynein motor complex in order to control retrograde trafficking of RAB9-associated late endosomes to the TGN. Involved in the recruitment of SGSM2 to melanosomes and is required for the proper trafficking of melanogenic enzymes TYR, TYRP1 and DCT/TYRP2 to melanosomes in melanocytes. In Homo sapiens (Human), this protein is Ras-related protein Rab-9A.